A 500-amino-acid chain; its full sequence is NAD(P)H-quinone oxidoreductase chain 4, chloroplastic (500 aa).

14 helical membrane passes run 4–24 (FPWL…IFFF), 35–55 (YTIC…CYHF), 87–107 (IGPV…AWPV), 113–130 (LFHF…GSFS), 134–154 (LLLF…LLSM), 167–187 (FILY…GMGL), 208–228 (ALEI…LPII), 242–262 (HYST…YGLV), 272–292 (AHSI…IYAA), 305–325 (IAYS…SITD), 330–350 (GAIL…FLAG), 386–406 (LALP…GIIT), 416–436 (ILIT…SLSM), and 463–483 (FVSI…DFVF).

It belongs to the complex I subunit 4 family.

It localises to the plastid. It is found in the chloroplast thylakoid membrane. It carries out the reaction a plastoquinone + NADH + (n+1) H(+)(in) = a plastoquinol + NAD(+) + n H(+)(out). It catalyses the reaction a plastoquinone + NADPH + (n+1) H(+)(in) = a plastoquinol + NADP(+) + n H(+)(out). The polypeptide is NAD(P)H-quinone oxidoreductase chain 4, chloroplastic (Nandina domestica (Heavenly bamboo)).